Reading from the N-terminus, the 363-residue chain is Flagellar P-ring protein (363 aa).

The signal sequence occupies residues 1 to 20 (MKLKLILAVAMLAFSLPSQA).

This sequence belongs to the FlgI family. As to quaternary structure, the basal body constitutes a major portion of the flagellar organelle and consists of four rings (L,P,S, and M) mounted on a central rod.

The protein resides in the periplasm. The protein localises to the bacterial flagellum basal body. Assembles around the rod to form the L-ring and probably protects the motor/basal body from shearing forces during rotation. This chain is Flagellar P-ring protein, found in Shewanella sp. (strain MR-7).